Reading from the N-terminus, the 261-residue chain is 6-phosphogluconolactonase (261 aa).

Belongs to the glucosamine/galactosamine-6-phosphate isomerase family. 6-phosphogluconolactonase subfamily.

The catalysed reaction is 6-phospho-D-glucono-1,5-lactone + H2O = 6-phospho-D-gluconate + H(+). It functions in the pathway carbohydrate degradation; pentose phosphate pathway; D-ribulose 5-phosphate from D-glucose 6-phosphate (oxidative stage): step 2/3. Functionally, hydrolysis of 6-phosphogluconolactone to 6-phosphogluconate. This chain is 6-phosphogluconolactonase (pgl), found in Streptomyces coelicolor (strain ATCC BAA-471 / A3(2) / M145).